A 113-amino-acid chain; its full sequence is Large ribosomal subunit protein uL22 (113 aa).

Belongs to the universal ribosomal protein uL22 family. As to quaternary structure, part of the 50S ribosomal subunit.

This protein binds specifically to 23S rRNA; its binding is stimulated by other ribosomal proteins, e.g. L4, L17, and L20. It is important during the early stages of 50S assembly. It makes multiple contacts with different domains of the 23S rRNA in the assembled 50S subunit and ribosome. In terms of biological role, the globular domain of the protein is located near the polypeptide exit tunnel on the outside of the subunit, while an extended beta-hairpin is found that lines the wall of the exit tunnel in the center of the 70S ribosome. The protein is Large ribosomal subunit protein uL22 of Thermus thermophilus (strain ATCC BAA-163 / DSM 7039 / HB27).